A 96-amino-acid chain; its full sequence is Acylphosphatase (96 aa).

The 86-residue stretch at 11-96 folds into the Acylphosphatase-like domain; it reads ARRWYVRGRV…ITSYDSFRIR (86 aa). Active-site residues include Arg26 and Asn44.

Belongs to the acylphosphatase family.

It catalyses the reaction an acyl phosphate + H2O = a carboxylate + phosphate + H(+). The chain is Acylphosphatase (acyP) from Solibacter usitatus (strain Ellin6076).